The following is a 505-amino-acid chain: Membrane-bound O-acyltransferase GUP1 (505 aa).

Residues Met-1–Asn-217 are Extracellular-facing. A helical transmembrane segment spans residues Phe-218 to Thr-238. The Cytoplasmic portion of the chain corresponds to Phe-239–Arg-266. The chain crosses the membrane as a helical span at residues Phe-267 to Ser-287. Topologically, residues Lys-288–Thr-296 are extracellular. A helical membrane pass occupies residues Pro-297–Ile-317. Over Pro-318–Arg-377 the chain is Cytoplasmic. The next 2 membrane-spanning stretches (helical) occupy residues Ile-378–Leu-398 and Leu-399–Phe-419. The active site involves His-392. Topologically, residues Lys-420–His-430 are cytoplasmic. The chain crosses the membrane as a helical span at residues Val-431–Phe-451. The Extracellular segment spans residues Cys-452–Thr-464. The helical transmembrane segment at Leu-465 to Gly-485 threads the bilayer. Over Ser-486 to Cys-505 the chain is Cytoplasmic.

The protein belongs to the membrane-bound acyltransferase family.

Its subcellular location is the cell membrane. It localises to the endoplasmic reticulum membrane. The protein resides in the mitochondrion membrane. Membrane-bound O-acyltransferase involved in the remodeling of glycosylphosphatidylinositol (GPI) anchors. Acts only on GPI-anchored proteins, but not on free GPI lipids. Also involved in lipid metabolism, having profound effects on sphingolipid-sterol-ordered domains integrity and assembly. Involved in cell integrity and apoptosis. The protein is Membrane-bound O-acyltransferase GUP1 (GUP1) of Millerozyma farinosa (Yeast).